Consider the following 422-residue polypeptide: Replication factor C large subunit (422 aa).

Residue 63-70 (GPPGVGKT) coordinates ATP.

Belongs to the activator 1 small subunits family. RfcL subfamily. As to quaternary structure, heteromultimer composed of small subunits (RfcS) and large subunits (RfcL).

In terms of biological role, part of the RFC clamp loader complex which loads the PCNA sliding clamp onto DNA. The protein is Replication factor C large subunit of Pyrobaculum arsenaticum (strain DSM 13514 / JCM 11321 / PZ6).